The primary structure comprises 381 residues: MTAQQKVNLLGLSRPQMEEFFLTMGEKKFRAQQVLKWIHHHQADSFEQMTDVGKALRQKLSEVAEIRGPKVTHESISRDGTRKWVFEMDNGGAVETVFIPDGRRGTLCVSSQVGCAVDCSFCSTGKQGFQRDMTSAEIIGQVWQASRAFGPRRNLGQHPITNVVMMGMGEPLLNYDKVLTAMRIMKDDLGYGIGKKRITVSTSGVIPKMNQLSEDLDVSLAVSLHAPNDELRNQLVPLNRKYPLKDLMAACKRYSKNITHRHNTITMEYVMLRDVNDKPEHARQLVKLLNGIPVKVNLIPFNPFPHAGYERSRKNDILEFHKYLNDNGVMTTVRTTRGDDIDAACGQLVGQVKDRTRRSERWKESIFHRTEQTDDNTAQTQ.

Catalysis depends on Glu95, which acts as the Proton acceptor. One can recognise a Radical SAM core domain in the interval 101-339; it reads DGRRGTLCVS…MTTVRTTRGD (239 aa). An intrachain disulfide couples Cys108 to Cys345. 3 residues coordinate [4Fe-4S] cluster: Cys115, Cys119, and Cys122. S-adenosyl-L-methionine contacts are provided by residues 169–170, Ser201, 223–225, and Asn302; these read GE and SLH. Cys345 serves as the catalytic S-methylcysteine intermediate.

Belongs to the radical SAM superfamily. RlmN family. Requires [4Fe-4S] cluster as cofactor.

It localises to the cytoplasm. It catalyses the reaction adenosine(2503) in 23S rRNA + 2 reduced [2Fe-2S]-[ferredoxin] + 2 S-adenosyl-L-methionine = 2-methyladenosine(2503) in 23S rRNA + 5'-deoxyadenosine + L-methionine + 2 oxidized [2Fe-2S]-[ferredoxin] + S-adenosyl-L-homocysteine. The catalysed reaction is adenosine(37) in tRNA + 2 reduced [2Fe-2S]-[ferredoxin] + 2 S-adenosyl-L-methionine = 2-methyladenosine(37) in tRNA + 5'-deoxyadenosine + L-methionine + 2 oxidized [2Fe-2S]-[ferredoxin] + S-adenosyl-L-homocysteine. Specifically methylates position 2 of adenine 2503 in 23S rRNA and position 2 of adenine 37 in tRNAs. m2A2503 modification seems to play a crucial role in the proofreading step occurring at the peptidyl transferase center and thus would serve to optimize ribosomal fidelity. The sequence is that of Dual-specificity RNA methyltransferase RlmN from Alcanivorax borkumensis (strain ATCC 700651 / DSM 11573 / NCIMB 13689 / SK2).